A 215-amino-acid polypeptide reads, in one-letter code: Large ribosomal subunit protein bL25 (215 aa).

2 stretches are compositionally biased toward polar residues: residues M1–K19 and E206–E215. Disordered regions lie at residues M1–G29 and A190–E215.

Belongs to the bacterial ribosomal protein bL25 family. CTC subfamily. In terms of assembly, part of the 50S ribosomal subunit; part of the 5S rRNA/L5/L18/L25 subcomplex. Contacts the 5S rRNA. Binds to the 5S rRNA independently of L5 and L18.

Functionally, this is one of the proteins that binds to the 5S RNA in the ribosome where it forms part of the central protuberance. This Mycobacterium leprae (strain TN) protein is Large ribosomal subunit protein bL25.